A 122-amino-acid chain; its full sequence is Large ribosomal subunit protein uL14 (122 aa).

It belongs to the universal ribosomal protein uL14 family. As to quaternary structure, part of the 50S ribosomal subunit. Forms a cluster with proteins L3 and L19. In the 70S ribosome, L14 and L19 interact and together make contacts with the 16S rRNA in bridges B5 and B8.

In terms of biological role, binds to 23S rRNA. Forms part of two intersubunit bridges in the 70S ribosome. The sequence is that of Large ribosomal subunit protein uL14 from Rickettsia canadensis (strain McKiel).